The sequence spans 412 residues: NADH-quinone oxidoreductase subunit D (412 aa).

It belongs to the complex I 49 kDa subunit family. In terms of assembly, NDH-1 is composed of 14 different subunits. Subunits NuoB, C, D, E, F, and G constitute the peripheral sector of the complex.

The protein localises to the cell inner membrane. The catalysed reaction is a quinone + NADH + 5 H(+)(in) = a quinol + NAD(+) + 4 H(+)(out). In terms of biological role, NDH-1 shuttles electrons from NADH, via FMN and iron-sulfur (Fe-S) centers, to quinones in the respiratory chain. The immediate electron acceptor for the enzyme in this species is believed to be a menaquinone. Couples the redox reaction to proton translocation (for every two electrons transferred, four hydrogen ions are translocated across the cytoplasmic membrane), and thus conserves the redox energy in a proton gradient. This Flavobacterium johnsoniae (strain ATCC 17061 / DSM 2064 / JCM 8514 / BCRC 14874 / CCUG 350202 / NBRC 14942 / NCIMB 11054 / UW101) (Cytophaga johnsonae) protein is NADH-quinone oxidoreductase subunit D.